A 501-amino-acid chain; its full sequence is CaM kinase-like vesicle-associated protein (501 aa).

The Protein kinase domain maps to 24–286 (YDLGQVIKTE…AEEAISHEWI (263 aa)). The segment at 327 to 501 (RAPEQSSTAA…AQESQREEAS (175 aa)) is disordered. Residues 331-365 (QSSTAAAQSASATDTATPGAAGGATAAAASGATSA) are compositionally biased toward low complexity. Polar residues predominate over residues 387 to 428 (TPATDGSATPATDGSVTPATDGSITPATDGSVTPATDRSATP). A Phosphothreonine modification is found at Thr435. The segment covering 438–451 (TEESTVPTTQSSAM) has biased composition (polar residues). Phosphothreonine is present on Thr459.

It belongs to the protein kinase superfamily. CAMK Ser/Thr protein kinase family. As to quaternary structure, interacts with calmodulin, in the presence of calcium. Requires Ca(2+) as cofactor.

The protein resides in the cell membrane. It is found in the cytoplasmic vesicle membrane. In terms of biological role, does not appear to have detectable kinase activity. In Homo sapiens (Human), this protein is CaM kinase-like vesicle-associated protein (CAMKV).